A 330-amino-acid polypeptide reads, in one-letter code: Phosphate acyltransferase (330 aa).

Belongs to the PlsX family. Homodimer. Probably interacts with PlsY.

Its subcellular location is the cytoplasm. It carries out the reaction a fatty acyl-[ACP] + phosphate = an acyl phosphate + holo-[ACP]. Its pathway is lipid metabolism; phospholipid metabolism. In terms of biological role, catalyzes the reversible formation of acyl-phosphate (acyl-PO(4)) from acyl-[acyl-carrier-protein] (acyl-ACP). This enzyme utilizes acyl-ACP as fatty acyl donor, but not acyl-CoA. The chain is Phosphate acyltransferase from Lactobacillus delbrueckii subsp. bulgaricus (strain ATCC 11842 / DSM 20081 / BCRC 10696 / JCM 1002 / NBRC 13953 / NCIMB 11778 / NCTC 12712 / WDCM 00102 / Lb 14).